Reading from the N-terminus, the 328-residue chain is Sialic acid-binding Ig-like lectin 15 (328 aa).

An N-terminal signal peptide occupies residues 1–19; sequence MEKSIWLLACLAWVLPTGS. Residues 20 to 263 lie on the Extracellular side of the membrane; that stretch reads FVRTKIDTTE…RFHGASGAST (244 aa). Residues 40-158 enclose the Ig-like V-type domain; that stretch reads PAQRWSMQVP…DVHDRYESRH (119 aa). 2 cysteine pairs are disulfide-bonded: Cys64–Cys142 and Cys95–Cys104. Residue Arg143 participates in N-acetylneuraminate binding. One can recognise an Ig-like C2-type domain in the interval 168-251; sequence PRIVNISVLP…SLGRSEASVY (84 aa). Residue Asn172 is glycosylated (N-linked (GlcNAc...) asparagine). A disulfide bridge links Cys187 with Cys237. A helical transmembrane segment spans residues 264–284; that stretch reads VALLLGALGFKALLLLGVLAA. Residues 285-328 are Cytoplasmic-facing; it reads RAARRRPEHLDTPDTPPRSQAQESNYENLSQMNPRSPPATMCSP. The disordered stretch occupies residues 289–328; it reads RRPEHLDTPDTPPRSQAQESNYENLSQMNPRSPPATMCSP. The span at 301–318 shows a compositional bias: polar residues; that stretch reads PRSQAQESNYENLSQMNP.

It belongs to the immunoglobulin superfamily. SIGLEC (sialic acid binding Ig-like lectin) family. In terms of assembly, interacts with TYROBP and HCST. As to expression, expressed in macrophage and/or dendritic cells of spleen and lymph nodes.

It is found in the membrane. Its function is as follows. Binds sialylated glycoproteins. This chain is Sialic acid-binding Ig-like lectin 15 (SIGLEC15), found in Homo sapiens (Human).